A 617-amino-acid chain; its full sequence is Chaperone protein DnaK (617 aa).

Residues 579–617 (KAQQEAQQASGEAGSADARGPDETVVDADYEVVDDEKRK) are disordered. Residues 580–594 (AQQEAQQASGEAGSA) are compositionally biased toward low complexity. Over residues 602–617 (TVVDADYEVVDDEKRK) the composition is skewed to acidic residues.

It belongs to the heat shock protein 70 family.

Functionally, acts as a chaperone. This chain is Chaperone protein DnaK, found in Methanosarcina acetivorans (strain ATCC 35395 / DSM 2834 / JCM 12185 / C2A).